The chain runs to 156 residues: Transcription antitermination protein NusB (156 aa).

This sequence belongs to the NusB family.

Its function is as follows. Involved in transcription antitermination. Required for transcription of ribosomal RNA (rRNA) genes. Binds specifically to the boxA antiterminator sequence of the ribosomal RNA (rrn) operons. The chain is Transcription antitermination protein NusB from Rickettsia bellii (strain OSU 85-389).